We begin with the raw amino-acid sequence, 440 residues long: Glycerate 2-kinase (440 aa).

K58 is a substrate binding site.

The protein belongs to the glycerate kinase type-1 family. In terms of assembly, homodimer. Mg(2+) serves as cofactor. Ni(2+) is required as a cofactor. The cofactor is Mn(2+). It depends on Co(2+) as a cofactor.

It carries out the reaction (R)-glycerate + ATP = (2R)-2-phosphoglycerate + ADP + H(+). In terms of biological role, catalyzes the ATP-dependent phosphorylation of D-glycerate to 2-phosphoglycerate. It can also utilize GTP, CTP, UTP, ADP or pyrophosphate as phosphate donor. The polypeptide is Glycerate 2-kinase (gck) (Pyrococcus horikoshii (strain ATCC 700860 / DSM 12428 / JCM 9974 / NBRC 100139 / OT-3)).